Reading from the N-terminus, the 147-residue chain is Transmembrane protein 210 (147 aa).

The signal sequence occupies residues 1–31; that stretch reads MAPCPQPESCPAGSPLGLICLSLLLIPASAG. Over 32–47 the chain is Extracellular; it reads TYCECSLGLSREALIA. A helical transmembrane segment spans residues 48 to 68; that stretch reads LIVVLAGVSASCFCALVVVAI. At 69–147 the chain is on the cytoplasmic side; it reads GVFRAKGDTC…PPPPPPPLPQ (79 aa). The disordered stretch occupies residues 128-147; the sequence is TMTAPLEPPPPPPPPPPLPQ. Residues 133-147 are compositionally biased toward pro residues; the sequence is LEPPPPPPPPPPLPQ.

It is found in the membrane. The protein resides in the cytoplasmic vesicle. It localises to the secretory vesicle. Its subcellular location is the acrosome. The chain is Transmembrane protein 210 (Tmem210) from Mus musculus (Mouse).